The primary structure comprises 234 residues: Demethylmenaquinone methyltransferase (234 aa).

S-adenosyl-L-methionine-binding positions include Thr-58, Asp-79, and 106–107; that span reads NA.

Belongs to the class I-like SAM-binding methyltransferase superfamily. MenG/UbiE family.

The catalysed reaction is a 2-demethylmenaquinol + S-adenosyl-L-methionine = a menaquinol + S-adenosyl-L-homocysteine + H(+). It participates in quinol/quinone metabolism; menaquinone biosynthesis; menaquinol from 1,4-dihydroxy-2-naphthoate: step 2/2. In terms of biological role, methyltransferase required for the conversion of demethylmenaquinol (DMKH2) to menaquinol (MKH2). The protein is Demethylmenaquinone methyltransferase of Bacillus pumilus (strain SAFR-032).